The chain runs to 794 residues: Copper amine oxidase-like protein cao2 (794 aa).

Substrate-binding positions include 307-318 (AYDLGEYGVGYR) and 391-396 (AANYEY). The active-site Proton acceptor is the Asp-309. Tyr-394 acts as the Schiff-base intermediate with substrate; via topaquinone in catalysis. Residue Tyr-394 is modified to 2',4',5'-topaquinone. 2 residues coordinate Cu cation: His-445 and His-447. Positions 563 to 584 (GDYAPQASDDTPKGLSKWISDD) are disordered. Mn(2+) is bound by residues Asp-593 and Ile-594. His-604 contacts Cu cation. Residues 634–748 (ALDTSSSVNS…NGGHHHHHHH (115 aa)) form a disordered region. Over residues 637–649 (TSSSVNSTSEATS) the composition is skewed to low complexity. The span at 652–714 (THHENLRDTS…DAAQKHEGRS (63 aa)) shows a compositional bias: basic and acidic residues. Residues 716 to 727 (TLAQPGQQNANQ) show a composition bias toward polar residues.

Belongs to the copper/topaquinone oxidase family. As to quaternary structure, homodimer. Cu cation is required as a cofactor. Requires Zn(2+) as cofactor. L-topaquinone serves as cofactor. It depends on Mn(2+) as a cofactor. Post-translationally, topaquinone (TPQ) is generated by copper-dependent autoxidation of a specific tyrosyl residue.

It is found in the cytoplasm. It catalyses the reaction a primary methyl amine + O2 + H2O = an aldehyde + H2O2 + NH4(+). Copper amine oxidase-like protein that does not show any copper amine oxidase activity. May be the appropriate amine substrate for cao2 has not been identified yet. The chain is Copper amine oxidase-like protein cao2 (cao2) from Schizosaccharomyces pombe (strain 972 / ATCC 24843) (Fission yeast).